The sequence spans 48 residues: uncharacterized protein (48 aa).

The helical transmembrane segment at 18 to 38 (IIIKYWYIDLTITIFAFLILY) threads the bilayer.

It is found in the host membrane. This is an uncharacterized protein from Acidianus bottle-shaped virus (isolate Italy/Pozzuoli) (ABV).